A 659-amino-acid polypeptide reads, in one-letter code: Mitochondrial Rho GTPase 1 (659 aa).

Residues 1–631 (MTKTRIRIVV…LTNDIDYRQT (631 aa)) lie on the Cytoplasmic side of the membrane. The 181-residue stretch at 3–183 (KTRIRIVVCG…FYLCQRTITN (181 aa)) folds into the Miro 1 domain. GTP is bound by residues 12–19 (GDSGVGKT), 61–63 (DTG), and 115–118 (NKCD). EF-hand domains follow at residues 199–234 (LGVL…CFSK) and 328–363 (LGYR…TPGL). Aspartate 212, aspartate 214, aspartate 216, glutamate 223, aspartate 341, aspartate 343, aspartate 345, and glutamate 352 together coordinate Ca(2+). A Miro 2 domain is found at 444–609 (RKVLNCYMLG…FIKLTEVALE (166 aa)). Residues 453–460 (GKGNSGKS), 489–493 (ELKGG), and 558–561 (LKAD) each bind GTP. Residues 632–652 (IVAISSVVGFASLFTFTALKI) traverse the membrane as a helical; Anchor for type IV membrane protein segment. Topologically, residues 653–659 (YSSFKNT) are mitochondrial intermembrane.

The protein belongs to the mitochondrial Rho GTPase family.

The protein resides in the mitochondrion outer membrane. Mitochondrial GTPase involved in mitochondrial trafficking. Probably involved in control of anterograde transport of mitochondria and their subcellular distribution. This Kluyveromyces lactis (strain ATCC 8585 / CBS 2359 / DSM 70799 / NBRC 1267 / NRRL Y-1140 / WM37) (Yeast) protein is Mitochondrial Rho GTPase 1 (GEM1).